The chain runs to 413 residues: Gamma-glutamyl phosphate reductase (413 aa).

This sequence belongs to the gamma-glutamyl phosphate reductase family.

Its subcellular location is the cytoplasm. It carries out the reaction L-glutamate 5-semialdehyde + phosphate + NADP(+) = L-glutamyl 5-phosphate + NADPH + H(+). It participates in amino-acid biosynthesis; L-proline biosynthesis; L-glutamate 5-semialdehyde from L-glutamate: step 2/2. Catalyzes the NADPH-dependent reduction of L-glutamate 5-phosphate into L-glutamate 5-semialdehyde and phosphate. The product spontaneously undergoes cyclization to form 1-pyrroline-5-carboxylate. The chain is Gamma-glutamyl phosphate reductase from Leuconostoc mesenteroides subsp. mesenteroides (strain ATCC 8293 / DSM 20343 / BCRC 11652 / CCM 1803 / JCM 6124 / NCDO 523 / NBRC 100496 / NCIMB 8023 / NCTC 12954 / NRRL B-1118 / 37Y).